The sequence spans 385 residues: Succinate--CoA ligase [ADP-forming] subunit beta (385 aa).

An ATP-grasp domain is found at 9–241 (KELLRDFGIN…IDEEEPSELE (233 aa)). Residues K46, 53–55 (GRG), E99, T102, and E107 contribute to the ATP site. Residues N196 and D210 each contribute to the Mg(2+) site. Residues N261 and 318 to 320 (GIV) contribute to the substrate site.

The protein belongs to the succinate/malate CoA ligase beta subunit family. As to quaternary structure, heterotetramer of two alpha and two beta subunits. Mg(2+) serves as cofactor.

The catalysed reaction is succinate + ATP + CoA = succinyl-CoA + ADP + phosphate. It catalyses the reaction GTP + succinate + CoA = succinyl-CoA + GDP + phosphate. It participates in carbohydrate metabolism; tricarboxylic acid cycle; succinate from succinyl-CoA (ligase route): step 1/1. Succinyl-CoA synthetase functions in the citric acid cycle (TCA), coupling the hydrolysis of succinyl-CoA to the synthesis of either ATP or GTP and thus represents the only step of substrate-level phosphorylation in the TCA. The beta subunit provides nucleotide specificity of the enzyme and binds the substrate succinate, while the binding sites for coenzyme A and phosphate are found in the alpha subunit. This is Succinate--CoA ligase [ADP-forming] subunit beta from Campylobacter fetus subsp. fetus (strain 82-40).